A 68-amino-acid polypeptide reads, in one-letter code: Amphipathic peptide CT1 (68 aa).

An N-terminal signal peptide occupies residues 1 to 23 (MKTQIVILIVAVLFLQLVSQSDA). Leucine amide is present on Leu36. Residues 40-68 (GLKNLDQYNDLFDGEISDADIKFLKDLMR) constitute a propeptide that is removed on maturation.

Belongs to the non-disulfide-bridged peptide (NDBP) superfamily. Short antimicrobial peptide (group 4) family. As to expression, expressed by the venom gland.

The protein resides in the secreted. It is found in the target cell membrane. In terms of biological role, amphipathic peptide that shows no antibacterial activity even at 50 uM but shows a low hemolytic activity against human erythrocytes. This Mesomexovis subcristatus (Scorpion) protein is Amphipathic peptide CT1.